The primary structure comprises 180 residues: Segregation and condensation protein B (180 aa).

The protein belongs to the ScpB family. Homodimer. Homodimerization may be required to stabilize the binding of ScpA to the Smc head domains. Component of a cohesin-like complex composed of ScpA, ScpB and the Smc homodimer, in which ScpA and ScpB bind to the head domain of Smc. The presence of the three proteins is required for the association of the complex with DNA.

The protein resides in the cytoplasm. Functionally, participates in chromosomal partition during cell division. May act via the formation of a condensin-like complex containing Smc and ScpA that pull DNA away from mid-cell into both cell halves. The chain is Segregation and condensation protein B from Staphylococcus aureus (strain MSSA476).